A 485-amino-acid chain; its full sequence is NADH-quinone oxidoreductase subunit N (485 aa).

14 helical membrane passes run 3 to 23, 30 to 50, 67 to 87, 96 to 116, 120 to 140, 154 to 174, 202 to 222, 247 to 267, 271 to 291, 299 to 319, 332 to 352, 375 to 395, 411 to 431, and 453 to 473; these read LFMP…TDLF, HLAY…VLNW, YASF…MASV, FQGE…MMAS, LITM…LVGF, LLLG…IYGF, FILG…AVPF, AAGF…PLAL, WALI…VLAI, MLGY…AAVG, LFYL…IIAI, ASAL…AGFL, WLMI…FNVI, and LALG…ETLL.

This sequence belongs to the complex I subunit 2 family. As to quaternary structure, NDH-1 is composed of 14 different subunits. Subunits NuoA, H, J, K, L, M, N constitute the membrane sector of the complex.

The protein localises to the cell membrane. It carries out the reaction a quinone + NADH + 5 H(+)(in) = a quinol + NAD(+) + 4 H(+)(out). Its function is as follows. NDH-1 shuttles electrons from NADH, via FMN and iron-sulfur (Fe-S) centers, to quinones in the respiratory chain. The immediate electron acceptor for the enzyme in this species is believed to be ubiquinone. Couples the redox reaction to proton translocation (for every two electrons transferred, four hydrogen ions are translocated across the cytoplasmic membrane), and thus conserves the redox energy in a proton gradient. This is NADH-quinone oxidoreductase subunit N from Dehalococcoides mccartyi (strain ATCC BAA-2100 / JCM 16839 / KCTC 5957 / BAV1).